A 438-amino-acid chain; its full sequence is Phospholipase D Y (438 aa).

Positions Met1–Ser19 are cleaved as a signal peptide. Asn50 carries N-linked (GlcNAc...) asparagine glycosylation. The PLD phosphodiesterase 1 domain occupies Gly145–Ser172. Active-site residues include His150, Lys152, and Asp157. 3 N-linked (GlcNAc...) asparagine glycosylation sites follow: Asn223, Asn336, and Asn394. The PLD phosphodiesterase 2 domain maps to Tyr373–Tyr399.

The protein belongs to the phospholipase D family.

It catalyses the reaction a 1,2-diacyl-sn-glycero-3-phosphocholine + H2O = a 1,2-diacyl-sn-glycero-3-phosphate + choline + H(+). Inhibited by butan-1-ol. Hydrolyzes membrane phospholipids, such as PtdCho (phosphatidylcholine), producing the free headgroup and PtdOH (phosphatidic acid; signaling molecule on its own). The chain is Phospholipase D Y (pldY) from Dictyostelium discoideum (Social amoeba).